Reading from the N-terminus, the 157-residue chain is Large ribosomal subunit protein bL20 (157 aa).

The interval 121 to 157 (TSAPAVSAEAAPKAKAAKKPAAKKAAAKKPVAEEAAK) is disordered. The span at 122-134 (SAPAVSAEAAPKA) shows a compositional bias: low complexity. Residues 135-147 (KAAKKPAAKKAAA) are compositionally biased toward basic residues.

It belongs to the bacterial ribosomal protein bL20 family.

Its function is as follows. Binds directly to 23S ribosomal RNA and is necessary for the in vitro assembly process of the 50S ribosomal subunit. It is not involved in the protein synthesizing functions of that subunit. This is Large ribosomal subunit protein bL20 (rplT) from Arthrobacter sp. (strain FB24).